We begin with the raw amino-acid sequence, 274 residues long: Large ribosomal subunit protein uL2 (274 aa).

A disordered region spans residues 220–259 (VRGAAMNPRDHPHGGGEGRAPRGMSTPKTKWGKPARGVKT). Residues 227 to 239 (PRDHPHGGGEGRA) show a composition bias toward basic and acidic residues. The span at 249-259 (KWGKPARGVKT) shows a compositional bias: basic residues.

This sequence belongs to the universal ribosomal protein uL2 family. In terms of assembly, part of the 50S ribosomal subunit. Forms a bridge to the 30S subunit in the 70S ribosome.

Its function is as follows. One of the primary rRNA binding proteins. Required for association of the 30S and 50S subunits to form the 70S ribosome, for tRNA binding and peptide bond formation. It has been suggested to have peptidyltransferase activity; this is somewhat controversial. Makes several contacts with the 16S rRNA in the 70S ribosome. The polypeptide is Large ribosomal subunit protein uL2 (Chloroflexus aggregans (strain MD-66 / DSM 9485)).